Here is a 585-residue protein sequence, read N- to C-terminus: Voltage-gated potassium channel KCNC1 (585 aa).

Residues M1 to R190 are Cytoplasmic-facing. S44 is subject to Phosphoserine. The Zn(2+) site is built by H77, C83, C104, and C105. The segment at S121–D147 is disordered. A phosphoserine mark is found at S130, S142, S158, and S160. Over residues S130–D147 the composition is skewed to acidic residues. Residues Y191–L209 form a helical membrane-spanning segment. Residues N220 and N229 are each glycosylated (N-linked (GlcNAc...) asparagine). Residues I248 to C267 form a helical membrane-spanning segment. Residues P268–N276 are Cytoplasmic-facing. Residues S277–L295 traverse the membrane as a helical segment. A helical; Voltage-sensor transmembrane segment spans residues F309 to L331. At R332 to E344 the chain is on the cytoplasmic side. The helical transmembrane segment at F345 to A366 threads the bilayer. Positions 400, 401, 402, and 403 each coordinate K(+). The Selectivity filter motif lies at T400–D405. The chain crosses the membrane as a helical span at residues L415–V436. The Cytoplasmic segment spans residues N437–T585. Position 474 is a phosphoserine (S474). T483 bears the Phosphothreonine mark.

It belongs to the potassium channel family. C (Shaw) (TC 1.A.1.2) subfamily. Kv3.1/KCNC1 sub-subfamily. Homotetramer. Homomultimer. Heteromultimer with KCNG3, KCNG4 and KCNV2. Heteromultimer with KCNC2. Heterotetramer with KCNC3. Interacts with the ancillary subunits KCNE1 and KCNE2; the interaction modulates channel activity. N-glycosylated; contains sialylated glycans. Expressed in brain. Expressed in globus pallidal neurons of the basal ganglia (at protein level). Detected on Purkinje cells in the cerebellum molecular layer (at protein level).

It is found in the cell membrane. The protein resides in the cell projection. Its subcellular location is the axon. The protein localises to the presynaptic cell membrane. The catalysed reaction is K(+)(in) = K(+)(out). Voltage-gated potassium channel that opens in response to the voltage difference across the membrane and through which potassium ions pass in accordance with their electrochemical gradient. The mechanism is time-dependent and inactivation is slow. Plays an important role in the rapid repolarization of fast-firing brain neurons. Can form functional homotetrameric channels and heterotetrameric channels that contain variable proportions of KCNC2, and possibly other family members as well. Contributes to fire sustained trains of very brief action potentials at high frequency in pallidal neurons. The polypeptide is Voltage-gated potassium channel KCNC1 (Rattus norvegicus (Rat)).